Reading from the N-terminus, the 192-residue chain is Fe/S biogenesis protein NfuA (192 aa).

Residues C150 and C153 each coordinate [4Fe-4S] cluster.

The protein belongs to the NfuA family. As to quaternary structure, homodimer. The cofactor is [4Fe-4S] cluster.

In terms of biological role, involved in iron-sulfur cluster biogenesis. Binds a 4Fe-4S cluster, can transfer this cluster to apoproteins, and thereby intervenes in the maturation of Fe/S proteins. Could also act as a scaffold/chaperone for damaged Fe/S proteins. This is Fe/S biogenesis protein NfuA from Vesicomyosocius okutanii subsp. Calyptogena okutanii (strain HA).